The chain runs to 214 residues: A-type ATP synthase subunit D (214 aa).

This sequence belongs to the V-ATPase D subunit family. In terms of assembly, has multiple subunits with at least A(3), B(3), C, D, E, F, H, I and proteolipid K(x).

The protein resides in the cell membrane. Functionally, component of the A-type ATP synthase that produces ATP from ADP in the presence of a proton gradient across the membrane. The protein is A-type ATP synthase subunit D of Pyrococcus furiosus (strain ATCC 43587 / DSM 3638 / JCM 8422 / Vc1).